Consider the following 294-residue polypeptide: HTH-type transcriptional regulator ClcR (294 aa).

An HTH lysR-type domain is found at 1–58; it reads MEFRQLRYFIAVAEEGNIGAAARRLHISQPPITRQIQALEQDLGVVLFERTHRGVELT. Positions 18–37 form a DNA-binding region, H-T-H motif; it reads IGAAARRLHISQPPITRQIQ.

Belongs to the LysR transcriptional regulatory family.

The protein localises to the cytoplasm. Functionally, involved in regulation of chlorinated catechol metabolism. Transcriptional activator of the clcABD chlorocatechol oxidative operon. This chain is HTH-type transcriptional regulator ClcR (clcR), found in Pseudomonas putida (Arthrobacter siderocapsulatus).